We begin with the raw amino-acid sequence, 225 residues long: MYSIKTDHKLMPRERLIRLGPEKLSNQELLAILLRTGNKEKHVLELSAYLLSSLDSLADLKKFSLQELQRLSGIGKVKAIEIKAMLELADRIQIAGQAVADPVLSSAQVAEKMMIELGDKQQEHLVAIYLDSQNKIIEEKTIFIGTVRKSIAEPREILYYACKNMATSLIVVHNHPSGLTKPSANDYHFTEKIKRSCDYLGLICLDHIIVSKHGYYSFREKSDLF.

The MPN domain occupies 102–224 (PVLSSAQVAE…YYSFREKSDL (123 aa)). Zn(2+)-binding residues include His173, His175, and Asp186. The JAMM motif signature appears at 173–186 (HNHPSGLTKPSAND).

Belongs to the UPF0758 family.

The chain is UPF0758 protein SZO_09140 from Streptococcus equi subsp. zooepidemicus (strain H70).